The chain runs to 91 residues: CRISPR-associated endoribonuclease Cas2 2 (91 aa).

D10 contributes to the Mg(2+) binding site.

It belongs to the CRISPR-associated endoribonuclease Cas2 protein family. In terms of assembly, homodimer, forms a heterotetramer with a Cas1 homodimer. The cofactor is Mg(2+).

Its function is as follows. CRISPR (clustered regularly interspaced short palindromic repeat), is an adaptive immune system that provides protection against mobile genetic elements (viruses, transposable elements and conjugative plasmids). CRISPR clusters contain sequences complementary to antecedent mobile elements and target invading nucleic acids. CRISPR clusters are transcribed and processed into CRISPR RNA (crRNA). Functions as a ssRNA-specific endoribonuclease. Involved in the integration of spacer DNA into the CRISPR cassette. In Thermodesulfovibrio yellowstonii (strain ATCC 51303 / DSM 11347 / YP87), this protein is CRISPR-associated endoribonuclease Cas2 2.